The primary structure comprises 458 residues: Argininosuccinate lyase (458 aa).

Belongs to the lyase 1 family. Argininosuccinate lyase subfamily.

It is found in the cytoplasm. It carries out the reaction 2-(N(omega)-L-arginino)succinate = fumarate + L-arginine. Its pathway is amino-acid biosynthesis; L-arginine biosynthesis; L-arginine from L-ornithine and carbamoyl phosphate: step 3/3. The protein is Argininosuccinate lyase of Actinobacillus pleuropneumoniae serotype 5b (strain L20).